The chain runs to 589 residues: Arginine--tRNA ligase (589 aa).

The 'HIGH' region signature appears at 131–141; sequence ANPTGPLHVGH.

Belongs to the class-I aminoacyl-tRNA synthetase family. In terms of assembly, monomer.

The protein resides in the cytoplasm. It carries out the reaction tRNA(Arg) + L-arginine + ATP = L-arginyl-tRNA(Arg) + AMP + diphosphate. The chain is Arginine--tRNA ligase from Legionella pneumophila subsp. pneumophila (strain Philadelphia 1 / ATCC 33152 / DSM 7513).